Reading from the N-terminus, the 147-residue chain is Myosin regulatory light chain (147 aa).

Threonine 1 is subject to N-acetylthreonine. EF-hand domains follow at residues 2–37 (ASAD…LGKN), 73–108 (EQSK…LGDA), and 109–144 (LTSS…GYPL). Ca(2+) contacts are provided by aspartate 15, aspartate 17, aspartate 19, lysine 21, glutamate 26, aspartate 86, asparagine 90, threonine 92, and glutamate 97.

This is Myosin regulatory light chain from Physarum polycephalum (Slime mold).